The chain runs to 410 residues: Elongation factor Tu (410 aa).

The 210-residue stretch at 10-219 (KTHVNVGTIG…ALDTYIPDPV (210 aa)) folds into the tr-type G domain. GTP is bound by residues 19-26 (GHVDHGKT), 88-92 (DCPGH), and 143-146 (NKCD). Residue T26 participates in Mg(2+) binding.

This sequence belongs to the TRAFAC class translation factor GTPase superfamily. Classic translation factor GTPase family. EF-Tu/EF-1A subfamily. As to quaternary structure, monomer.

The protein localises to the cytoplasm. The catalysed reaction is GTP + H2O = GDP + phosphate + H(+). GTP hydrolase that promotes the GTP-dependent binding of aminoacyl-tRNA to the A-site of ribosomes during protein biosynthesis. In Brachyspira hyodysenteriae (Treponema hyodysenteriae), this protein is Elongation factor Tu.